The chain runs to 427 residues: Thymidine phosphorylase (427 aa).

It belongs to the thymidine/pyrimidine-nucleoside phosphorylase family. As to quaternary structure, homodimer.

The enzyme catalyses thymidine + phosphate = 2-deoxy-alpha-D-ribose 1-phosphate + thymine. Its function is as follows. The enzymes which catalyze the reversible phosphorolysis of pyrimidine nucleosides are involved in the degradation of these compounds and in their utilization as carbon and energy sources, or in the rescue of pyrimidine bases for nucleotide synthesis. The chain is Thymidine phosphorylase (deoA) from Mycobacterium tuberculosis (strain CDC 1551 / Oshkosh).